A 935-amino-acid chain; its full sequence is Bifunctional alpha-galactosidase/sucrose kinase AgaSK (935 aa).

The interval 1–720 (MAIIYNPNKK…EAYQFAFTEL (720 aa)) is alpha-galactosidase. E176, E277, and F280 together coordinate Mg(2+). Residues 366-367 (DD), R443, 476-480 (KWDMN), and 518-521 (CSGG) contribute to the substrate site. D526 acts as the Nucleophile in catalysis. D540 is a substrate binding site. E606 acts as the Proton donor/acceptor in catalysis. The tract at residues 721–935 (KEAGRLYEKV…VGKDGSVYEQ (215 aa)) is sucrose kinase. ATP contacts are provided by residues 748-752 (GGSGS) and A824.

In the N-terminal section; belongs to the glycosyl hydrolase 36 family. This sequence in the C-terminal section; belongs to the uridine kinase family. As to quaternary structure, homotetramer. The cofactor is Mg(2+).

The catalysed reaction is Hydrolysis of terminal, non-reducing alpha-D-galactose residues in alpha-D-galactosides, including galactose oligosaccharides, galactomannans and galactolipids.. In terms of biological role, bifunctional enzyme with alpha-galactosidase and sucrose kinase activities. Produces sucrose-6-phosphate directly from raffinose. Binds ATP. Phosphorylates sucrose specifically on the C6 position of glucose in the presence of ATP. Hydrolyzes melibiose, raffinose, stachyose and synthetic substrate p-nitrophenyl-alpha-D-galactopyranoside with high activity. Low activity against locust bean gum, guar gum and synthetic substrates xylose alpha-D-4-nitrophenol, glucose alpha-D-4-nitrophenol and o-nitrophenyl-alpha-D-galactopyranoside. This chain is Bifunctional alpha-galactosidase/sucrose kinase AgaSK, found in Mediterraneibacter gnavus (Ruminococcus gnavus).